A 118-amino-acid polypeptide reads, in one-letter code: Vitelline membrane protein Vm32E (118 aa).

A signal peptide spans 1-17 (MKIVALTLVAFVALAGA). Residues 36 to 75 (GYPAPPCPTNYLFSCQPNLAPAPCAQEAQAPAYGSAGAYT) form the VM domain.

This sequence belongs to the vitelline membrane family.

It is found in the secreted. In terms of biological role, major early eggshell protein. The chain is Vitelline membrane protein Vm32E from Drosophila sechellia (Fruit fly).